The following is a 339-amino-acid chain: Intelectin-1 (339 aa).

The signal sequence occupies residues 1 to 18 (MLSYSLLLLALAFPAGHA). The Fibrinogen C-terminal domain occupies 58 to 108 (GDMNYGYRSCNEIKSSDSRAPDGIYTLATEDGESYQTFCDMTTNGGGWTLV). Cysteine 67 and cysteine 96 are disulfide-bonded. Ca(2+) contacts are provided by histidine 112, glutamate 113, asparagine 115, glycine 118, glycine 123, aspartate 124, and aspartate 159. 3 disulfide bridges follow: cysteine 120–cysteine 306, cysteine 225–cysteine 285, and cysteine 277–cysteine 291. A glycan (N-linked (GlcNAc...) asparagine) is linked at asparagine 189. Residues asparagine 286, glutamate 288, glutamate 300, and aspartate 308 each contribute to the Ca(2+) site. A carbohydrate contacts are provided by residues 288-289 (EH) and glutamate 300.

Homotrimer; disulfide-linked. Homohexamer; disulfide-linked. Forms primarily homotrimers in solution, but can also form homohexamers. N-glycosylated.

It is found in the secreted. Its subcellular location is the cytoplasmic vesicle. The protein localises to the secretory vesicle. Lectin that specifically recognizes microbial carbohydrate chains in a calcium-dependent manner. Binds to microbial glycans that contain a terminal acyclic 1,2-diol moiety, including beta-linked D-galactofuranose (beta-Galf) and D-phosphoglycerol-modified glycans. Binds to S.pneumoniae serotypes with glycans that contain beta-linked D-galactofuranose (beta-Galf) and with D-phosphoglycerol-modified glycans. Can bind a variety of monosaccharides (in vitro). Probably plays a role in the defense system against microorganisms. This Xenopus laevis (African clawed frog) protein is Intelectin-1 (itln1).